Here is a 658-residue protein sequence, read N- to C-terminus: Carnitine O-palmitoyltransferase 2, mitochondrial (658 aa).

The transit peptide at 1-26 directs the protein to the mitochondrion; the sequence is MARLLTSSSALRWGAVSSSQSVGRAY. Residues 27–179 are Mitochondrial matrix-facing; sequence SSGSPDTEYV…GYLEPEIFHL (153 aa). The note=Mitochondrial inner membrane intramembrane region spans 180–209; that stretch reads NPAKSDTLTFRKLIRFVPSSLSWYGAYMVN. The Mitochondrial matrix segment spans residues 210 to 658; sequence AYPLDMSQYF…FTVLQDKPIK (449 aa). Catalysis depends on H373, which acts as the Proton acceptor. Residue 453 to 465 participates in CoA binding; the sequence is GKELLKTQKLSPD. (R)-carnitine contacts are provided by Y487, S489, and T500.

This sequence belongs to the carnitine/choline acetyltransferase family.

The protein resides in the mitochondrion inner membrane. It catalyses the reaction (R)-carnitine + hexadecanoyl-CoA = O-hexadecanoyl-(R)-carnitine + CoA. It carries out the reaction octanoyl-CoA + (R)-carnitine = O-octanoyl-(R)-carnitine + CoA. The enzyme catalyses decanoyl-CoA + (R)-carnitine = O-decanoyl-(R)-carnitine + CoA. The catalysed reaction is dodecanoyl-CoA + (R)-carnitine = O-dodecanoyl-R-carnitine + CoA. It catalyses the reaction tetradecanoyl-CoA + (R)-carnitine = O-tetradecanoyl-(R)-carnitine + CoA. It carries out the reaction (R)-carnitine + octadecanoyl-CoA = O-octadecanoyl-(R)-carnitine + CoA. The enzyme catalyses eicosanoyl-CoA + (R)-carnitine = O-eicosanoyl-(R)-carnitine + CoA. The catalysed reaction is (9Z)-tetradecenoyl-CoA + (R)-carnitine = O-(9Z)-tetradecenoyl-(R)-carnitine + CoA. It catalyses the reaction (5Z)-tetradecenoyl-CoA + (R)-carnitine = O-(5Z)-tetradecenoyl-(R)-carnitine + CoA. It carries out the reaction (R)-carnitine + (9Z)-octadecenoyl-CoA = O-(9Z)-octadecenoyl-(R)-carnitine + CoA. The enzyme catalyses 4,8-dimethylnonanoyl-CoA + (R)-carnitine = O-4,8-dimethylnonanoyl-(R)-carnitine + CoA. The protein operates within lipid metabolism; fatty acid beta-oxidation. Involved in the intramitochondrial synthesis of acylcarnitines from accumulated acyl-CoA metabolites. Reconverts acylcarnitines back into the respective acyl-CoA esters that can then undergo beta-oxidation, an essential step for the mitochondrial uptake of long-chain fatty acids and their subsequent beta-oxidation in the mitochondrion. Active with medium (C8-C12) and long-chain (C14-C18) acyl-CoA esters. This is Carnitine O-palmitoyltransferase 2, mitochondrial (cpt2) from Xenopus tropicalis (Western clawed frog).